The primary structure comprises 435 residues: MGRPQRGDTAKERRERQDKVTSPPESGPISQSGLSDTVDWTSETNENMWLAYDFDERKDINQARGQDIHRDQELFDVVLQNNMSDDQFASTSASVSDDWYDTGFDQAFLQPSSTSTTAYSVEPSPFISIEPPTLTKETKKRNSQSSDSSKPSSTSSQSLIERVTSLNLDLHQQSIIAGQIVDEFGNIDPDMIDPLHKDNRLSFAVDSMTQGLQNFHSLLLEIINTANGTTFSSESASPHVNRPPIQQQQSPSRFLAPPSRSCVPSLFCFREGNSSQQQSKNNATGIDLPTSLMIISCHIHLIRLCRHVFAGIRAALSSKDQHQQALLVLSSCQVGGVSISHDSDLKLLILIQVVARLINKIGVLLGYPCSPADLSNSAVGNLGNATEDERKKMLLPQLLRFVLAQEGVAGQSSHGDGMEGLREEIRKLNEVLATS.

Positions 1 to 19 are enriched in basic and acidic residues; sequence MGRPQRGDTAKERRERQDK. 3 disordered regions span residues 1–40, 115–158, and 231–257; these read MGRPQRGDTAKERRERQDKVTSPPESGPISQSGLSDTVDW, STTA…SSQS, and FSSESASPHVNRPPIQQQQSPSRFLAP. The segment covering 28-40 has biased composition (polar residues); sequence PISQSGLSDTVDW. Positions 143–158 are enriched in low complexity; sequence SQSSDSSKPSSTSSQS.

The protein resides in the nucleus. Its function is as follows. Transcription factor; part of the gene cluster that mediates the biosynthesis of GKK1032, fungal natural products containing a macrocyclic para-cyclophane connected to a decahydrofluorene ring system that show potent antitumor activities. In Penicillium citrinum, this protein is Transcription factor gkaF.